We begin with the raw amino-acid sequence, 147 residues long: Large ribosomal subunit protein uL11 (147 aa).

The protein belongs to the universal ribosomal protein uL11 family. As to quaternary structure, part of the ribosomal stalk of the 50S ribosomal subunit. Interacts with L10 and the large rRNA to form the base of the stalk. L10 forms an elongated spine to which L12 dimers bind in a sequential fashion forming a multimeric L10(L12)X complex. One or more lysine residues are methylated.

Functionally, forms part of the ribosomal stalk which helps the ribosome interact with GTP-bound translation factors. The protein is Large ribosomal subunit protein uL11 of Corynebacterium aurimucosum (strain ATCC 700975 / DSM 44827 / CIP 107346 / CN-1) (Corynebacterium nigricans).